Here is a 439-residue protein sequence, read N- to C-terminus: Chromosomal replication initiator protein DnaA (439 aa).

Residues 1 to 75 (MESWSRCLER…GIREVVLAIG (75 aa)) form a domain I, interacts with DnaA modulators region. Residues 75 to 101 (GSRPKTTELPVPVDTTGRLSSTVPFNG) are domain II. The interval 102-319 (NLDTHYNFDN…GALNTLVARA (218 aa)) is domain III, AAA+ region. ATP is bound by residues glycine 147, glycine 149, lysine 150, and threonine 151. The domain IV, binds dsDNA stretch occupies residues 320 to 439 (NFTGRAVTIE…WDKLMRKFSE (120 aa)).

This sequence belongs to the DnaA family. As to quaternary structure, oligomerizes as a right-handed, spiral filament on DNA at oriC.

The protein resides in the cytoplasm. Functionally, plays an essential role in the initiation and regulation of chromosomal replication. ATP-DnaA binds to the origin of replication (oriC) to initiate formation of the DNA replication initiation complex once per cell cycle. Binds the DnaA box (a 9 base pair repeat at the origin) and separates the double-stranded (ds)DNA. Forms a right-handed helical filament on oriC DNA; dsDNA binds to the exterior of the filament while single-stranded (ss)DNA is stabiized in the filament's interior. The ATP-DnaA-oriC complex binds and stabilizes one strand of the AT-rich DNA unwinding element (DUE), permitting loading of DNA polymerase. After initiation quickly degrades to an ADP-DnaA complex that is not apt for DNA replication. Binds acidic phospholipids. This chain is Chromosomal replication initiator protein DnaA, found in Xylella fastidiosa (strain 9a5c).